We begin with the raw amino-acid sequence, 171 residues long: Putative F-box protein At1g32020 (171 aa).

The F-box domain maps to 3-49 (CDRISTLPDHLVAKIVSYLGIKDSIKTSVLSKRWEFVWLKVVGLDLK).

This is Putative F-box protein At1g32020 from Arabidopsis thaliana (Mouse-ear cress).